The following is a 375-amino-acid chain: Probable sugar phosphate/phosphate translocator At3g17430 (375 aa).

Transmembrane regions (helical) follow at residues 9–29 (LVLT…VILY), 43–63 (LPIT…FLLI), 76–96 (FEIY…SLWF), 106–126 (VAFI…MAVV), 140–160 (MLLV…FNIV), 163–183 (VYQV…QVLL), 193–213 (ITSL…PWYV), 229–249 (WIFF…FLVI), 257–276 (IRVA…TVIF), and 280–302 (TITG…YNYI). Positions 328 to 348 (EKKSSDKFNPNDSVEIPRVGG) are disordered.

This sequence belongs to the TPT transporter family. TPT (TC 2.A.7.9) subfamily.

The protein resides in the membrane. The protein is Probable sugar phosphate/phosphate translocator At3g17430 of Arabidopsis thaliana (Mouse-ear cress).